We begin with the raw amino-acid sequence, 564 residues long: MRSTGYLLTLSAAFQVAQAAVTANNSQLLTWWHNTGEINTQTPVADGNVRQSGLYSVKVQTTPASSSLYYDSFVYLAIPGNGMSDQLQYTQGYNQTQAWTSFLYSHDATVKISRNGSSANSNVVIRPTSLNFPVRYDNQSVYITVPYSPTGYRFSVEFDDDLISLAPSGARQPENALLIFASPFENSSTKPQPGSPNSIAPAPGRVLGLNTTSASTVVFNPGVYYFTGHDHMVLSSSVTWVYFAPGAYVKGAVEFLSTASEVKASGHGVLSGEQYVWYADPDEGYQKASGANNNGLRMWRGTLGNSSQTFVLNGVTVSAPPFNSMDWSGNSLDLITCRVDDYKQVGAFYGQTDGLEMYPGTILQDVFYHTDDDGLKMYYSNVTARNIVMWKESVAPVVEFGWTPRNTENVLFDNVDVIHQAYANAGNNPGIFGAVNNYLYAPDGLSSNHSTGNSNMTVRNITWSNFRAEGSSSALFRINPIQNLDNISIKNVSIESFEPLSINTTESWMPVWYDLNNGKQITVTDFSIEGFTVGNTTITASNAASVGRIDGVDPAYAGSVHYID.

The first 19 residues, 1-19, serve as a signal peptide directing secretion; sequence MRSTGYLLTLSAAFQVAQA. 15 N-linked (GlcNAc...) asparagine glycosylation sites follow: Asn24, Asn94, Asn115, Asn138, Asn186, Asn210, Asn305, Asn381, Asn448, Asn455, Asn460, Asn486, Asn491, Asn503, and Asn535.

Post-translationally, N-glycosylated.

Its subcellular location is the secreted. The catalysed reaction is Hydrolysis of pullulan to isopanose (6-alpha-maltosylglucose).. Its function is as follows. Hydrolyzes pullulan, a linear polymer which is composed of maltotriose units with alpha-1,6 glucosidic linkages, to produce isopanose (Glca1-4Glca1-6Glc). This Aspergillus niger protein is Isopullulanase (ipuA).